A 99-amino-acid chain; its full sequence is Acylphosphatase-1 (99 aa).

N-acetylalanine is present on Ala2. Residues Ser9–Lys99 enclose the Acylphosphatase-like domain. Active-site residues include Arg24 and Asn42.

Belongs to the acylphosphatase family.

The enzyme catalyses an acyl phosphate + H2O = a carboxylate + phosphate + H(+). The polypeptide is Acylphosphatase-1 (Acyp1) (Mus musculus (Mouse)).